A 233-amino-acid chain; its full sequence is Ras-related protein RABA6a (233 aa).

20–27 contacts GTP; the sequence is GDSAVGKS. An Effector region motif is present at residues 42–50; sequence SKPTIGVEF. Residues 68 to 72, 126 to 129, and 156 to 157 contribute to the GTP site; these read DTAGQ, NKSD, and SA. 2 S-geranylgeranyl cysteine lipidation sites follow: cysteine 230 and cysteine 231.

It belongs to the small GTPase superfamily. Rab family.

The protein resides in the cell membrane. Its function is as follows. Intracellular vesicle trafficking and protein transport. This chain is Ras-related protein RABA6a (RABA6A), found in Arabidopsis thaliana (Mouse-ear cress).